The following is a 290-amino-acid chain: S-adenosylmethionine decarboxylase proenzyme (290 aa).

Ser-138 functions as the Schiff-base intermediate with substrate; via pyruvic acid in the catalytic mechanism. Ser-138 is modified (pyruvic acid (Ser); by autocatalysis). His-143 serves as the catalytic Proton acceptor; for processing activity. The active-site Proton donor; for catalytic activity is the Cys-166.

Belongs to the prokaryotic AdoMetDC family. Type 2 subfamily. As to quaternary structure, heterooctamer of four alpha and four beta chains arranged as a tetramer of alpha/beta heterodimers. Pyruvate is required as a cofactor. In terms of processing, is synthesized initially as an inactive proenzyme. Formation of the active enzyme involves a self-maturation process in which the active site pyruvoyl group is generated from an internal serine residue via an autocatalytic post-translational modification. Two non-identical subunits are generated from the proenzyme in this reaction, and the pyruvate is formed at the N-terminus of the alpha chain, which is derived from the carboxyl end of the proenzyme. The post-translation cleavage follows an unusual pathway, termed non-hydrolytic serinolysis, in which the side chain hydroxyl group of the serine supplies its oxygen atom to form the C-terminus of the beta chain, while the remainder of the serine residue undergoes an oxidative deamination to produce ammonia and the pyruvoyl group blocking the N-terminus of the alpha chain.

It catalyses the reaction S-adenosyl-L-methionine + H(+) = S-adenosyl 3-(methylsulfanyl)propylamine + CO2. The protein operates within amine and polyamine biosynthesis; S-adenosylmethioninamine biosynthesis; S-adenosylmethioninamine from S-adenosyl-L-methionine: step 1/1. Its function is as follows. Catalyzes the decarboxylation of S-adenosylmethionine to S-adenosylmethioninamine (dcAdoMet), the propylamine donor required for the synthesis of the polyamines spermine and spermidine from the diamine putrescine. This chain is S-adenosylmethionine decarboxylase proenzyme, found in Heliobacterium modesticaldum (strain ATCC 51547 / Ice1).